Here is a 797-residue protein sequence, read N- to C-terminus: Sodium/hydrogen exchanger 4 (797 aa).

The Cytoplasmic segment spans residues 1–13 (MGPAMFMAFRLWN). The segment at residues 14–28 (WLLLLAVLTRSEATS) is an intramembrane region (name=A/M1). The Cytoplasmic segment spans residues 29–69 (YVNESSNPTAQQAPDARFAASSSDPDEGISVFELDYDYVQI). The interval 32–52 (ESSNPTAQQAPDARFAASSSD) is disordered. The segment at residues 70–90 (PYEVTLWILLASLAKIGFHLY) is an intramembrane region (name=B/M2). Over 91 to 94 (HRLP) the chain is Cytoplasmic. The chain crosses the membrane as a helical span at residues 95–114 (HLMPESCLLIIVGALVGGII). Over 115–127 (FGTHHKSPPVMDS) the chain is Extracellular. A helical membrane pass occupies residues 128–148 (SIYFLYLLPPIVLESGYFMPT). The Cytoplasmic segment spans residues 149 to 154 (RPFFEN). The helical transmembrane segment at 155-175 (IGSILWWAGLGALINAFGIGL) threads the bilayer. At 176 to 194 (SLYFICQIKAFGLGDINLL) the chain is on the extracellular side. A helical membrane pass occupies residues 195–215 (HNLLFGSLISAVDPVAVLAVF). Topologically, residues 216–226 (EEARVNEQLYM) are cytoplasmic. Residues 227 to 247 (MIFGEALLNDGISVVLYNILI) traverse the membrane as a helical segment. Residues 248–270 (AFTKMHKFEDIEAVDILAGCARF) are Extracellular-facing. The helical transmembrane segment at 271-291 (VIVGCGGVFFGIIFGFISAFI) threads the bilayer. The Cytoplasmic portion of the chain corresponds to 292-304 (TRFTQNISAIEPL). The helical transmembrane segment at 305–325 (IVFMFSYLSYLAAETLYLSGI) threads the bilayer. Topologically, residues 326-352 (LAITACAVTMKKYVEENVSQTSYTTIK) are extracellular. N-linked (GlcNAc...) asparagine glycosylation occurs at Asn-342. The helical transmembrane segment at 353 to 373 (YFMKMLSSVSETLIFIFMGVS) threads the bilayer. At 374 to 384 (TIGKNHEWNWA) the chain is on the cytoplasmic side. A helical transmembrane segment spans residues 385-405 (FICFTLLFCQIWRAISVFTLF). Residues 406-420 (YVSNQFRTFPFSIKD) are Extracellular-facing. The segment at residues 421–441 (QFIIFYSGVRGAGSFSLAFLL) is an intramembrane region (name=L). The Extracellular portion of the chain corresponds to 442–450 (PLSLFPRKK). Residues 451 to 471 (LFVTATLVVTYFTVFFQGITI) traverse the membrane as a helical segment. The Cytoplasmic portion of the chain corresponds to 472-797 (GPLVRYLDVR…KSHSPLLHRK (326 aa)). The segment covering 759 to 769 (YDSGEQTEEET) has biased composition (acidic residues). The segment at 759–797 (YDSGEQTEEETSAILSRWTAEHRHSTEHHKSHSPLLHRK) is disordered. The segment covering 783 to 797 (STEHHKSHSPLLHRK) has biased composition (basic residues).

This sequence belongs to the monovalent cation:proton antiporter 1 (CPA1) transporter (TC 2.A.36) family. Homodimer; each protomer has one site for sodium and one site for proton binding. Interacts with CHP1 and CHP2. May be phosphorylated. In terms of tissue distribution, expressed in kidney. Expressed in uterus and endometrial epithelial cells. Expressed in the inner segments of inner medullary collecting ducts (IMCD) in kidney. Expressed in AGTR1-positive neurons in organum vasculosum of the lamina terminalis (at protein level).

It is found in the basolateral cell membrane. The protein localises to the apical cell membrane. Its subcellular location is the zymogen granule membrane. It catalyses the reaction Na(+)(in) + H(+)(out) = Na(+)(out) + H(+)(in). It carries out the reaction Na(+)(out) + NH4(+)(in) = Na(+)(in) + NH4(+)(out). Its activity is regulated as follows. Up-regulated in response to high extracellular sodium concentration. In terms of biological role, electroneutral antiporter that exchanges sodium for protons or ammonium ions at the basolateral membrane of epithelia to regulate cell volume and intracellular pH upon hypertonic conditions. As part of transcellular ammonia transport in renal tubules, mediates basolateral ammonium extrusion in the medullary thick ascending limb, regulating the corticopapillary ammonium gradient and overall renal acid excretion. Mediates sodium:proton exchange in gastric parietal cells secondary to cAMP-dependent acid secretion and hyperosmolarity. Possibly coupled to chloride:bicarbonate antiporter, enables loading of parietal cells with sodium and chloride ions to maintain cell volume and normal gastric acid secretion. Functions as a sodium sensor in neurons of organum vasculosum of the lamina terminalis where it regulates water intake in response to increased sodium concentration in body fluids. The polypeptide is Sodium/hydrogen exchanger 4 (Slc9a4) (Mus musculus (Mouse)).